We begin with the raw amino-acid sequence, 484 residues long: Glycogen synthase (484 aa).

K15 serves as a coordination point for ADP-alpha-D-glucose.

The protein belongs to the glycosyltransferase 1 family. Bacterial/plant glycogen synthase subfamily.

The catalysed reaction is [(1-&gt;4)-alpha-D-glucosyl](n) + ADP-alpha-D-glucose = [(1-&gt;4)-alpha-D-glucosyl](n+1) + ADP + H(+). It participates in glycan biosynthesis; glycogen biosynthesis. Functionally, synthesizes alpha-1,4-glucan chains using ADP-glucose. In Bacillus subtilis (strain 168), this protein is Glycogen synthase (glgA).